The sequence spans 286 residues: Formamidopyrimidine-DNA glycosylase (286 aa).

Pro-2 functions as the Schiff-base intermediate with DNA in the catalytic mechanism. Residue Glu-3 is the Proton donor of the active site. The active-site Proton donor; for beta-elimination activity is the Lys-61. DNA-binding residues include His-103, Arg-122, and Arg-164. The segment at 250–284 adopts an FPG-type zinc-finger fold; it reads NAYGQTGEPCGRCGTQIVRENFMNRGSHYCPNCQK. The active-site Proton donor; for delta-elimination activity is the Arg-274.

Belongs to the FPG family. Monomer. Zn(2+) serves as cofactor.

It catalyses the reaction Hydrolysis of DNA containing ring-opened 7-methylguanine residues, releasing 2,6-diamino-4-hydroxy-5-(N-methyl)formamidopyrimidine.. The catalysed reaction is 2'-deoxyribonucleotide-(2'-deoxyribose 5'-phosphate)-2'-deoxyribonucleotide-DNA = a 3'-end 2'-deoxyribonucleotide-(2,3-dehydro-2,3-deoxyribose 5'-phosphate)-DNA + a 5'-end 5'-phospho-2'-deoxyribonucleoside-DNA + H(+). Involved in base excision repair of DNA damaged by oxidation or by mutagenic agents. Acts as a DNA glycosylase that recognizes and removes damaged bases. Has a preference for oxidized purines, such as 7,8-dihydro-8-oxoguanine (8-oxoG). Has AP (apurinic/apyrimidinic) lyase activity and introduces nicks in the DNA strand. Cleaves the DNA backbone by beta-delta elimination to generate a single-strand break at the site of the removed base with both 3'- and 5'-phosphates. In Corynebacterium glutamicum (strain R), this protein is Formamidopyrimidine-DNA glycosylase.